Consider the following 429-residue polypeptide: Argininosuccinate lyase (429 aa).

It belongs to the lyase 1 family. Argininosuccinate lyase subfamily.

The protein resides in the cytoplasm. The enzyme catalyses 2-(N(omega)-L-arginino)succinate = fumarate + L-arginine. It participates in amino-acid biosynthesis; L-arginine biosynthesis; L-arginine from L-ornithine and carbamoyl phosphate: step 3/3. The chain is Argininosuccinate lyase from Pyrobaculum aerophilum (strain ATCC 51768 / DSM 7523 / JCM 9630 / CIP 104966 / NBRC 100827 / IM2).